Reading from the N-terminus, the 488-residue chain is Sucrose 6(F)-phosphate phosphorylase (488 aa).

Residues aspartate 49, histidine 87, 195 to 197 (RLD), glutamate 238, 295 to 296 (HD), 342 to 345 (DVHQ), and arginine 399 each bind sucrose 6(F)-phosphate. The active-site Nucleophile is the aspartate 197. The Proton donor/acceptor role is filled by glutamate 238.

Belongs to the glycosyl hydrolase 13 family. Sucrose phosphorylase subfamily. Monomer.

It catalyses the reaction sucrose 6(F)-phosphate + phosphate = beta-D-fructose 6-phosphate + alpha-D-glucose 1-phosphate. Functionally, catalyzes the reversible phosphorolysis of sucrose 6(F)-phosphate into alpha-D-glucose 1-phosphate (Glc1P) and D-fructose 6-phosphate. May be involved in a new pathway for the degradation of sucrose, which could become phosphorylated on its fructose moiety during uptake via a PTS system. To a lesser extent, can also reversibly act on sucrose in vitro. Is also able to catalyze transglycosylation reactions in vitro. This Thermoanaerobacterium thermosaccharolyticum (strain ATCC 7956 / DSM 571 / NCIMB 9385 / NCA 3814 / NCTC 13789 / WDCM 00135 / 2032) (Clostridium thermosaccharolyticum) protein is Sucrose 6(F)-phosphate phosphorylase.